The following is a 482-amino-acid chain: UDP-N-acetylmuramate--L-alanine ligase (482 aa).

129-135 lines the ATP pocket; sequence GTHGKTT.

This sequence belongs to the MurCDEF family.

The protein localises to the cytoplasm. It catalyses the reaction UDP-N-acetyl-alpha-D-muramate + L-alanine + ATP = UDP-N-acetyl-alpha-D-muramoyl-L-alanine + ADP + phosphate + H(+). Its pathway is cell wall biogenesis; peptidoglycan biosynthesis. In terms of biological role, cell wall formation. The polypeptide is UDP-N-acetylmuramate--L-alanine ligase (Acinetobacter baylyi (strain ATCC 33305 / BD413 / ADP1)).